A 248-amino-acid polypeptide reads, in one-letter code: MSLFPSLPLLLLSVVAASYSETVTCEDAQKTCPAVIACSSPGINGFPGKDGRDGTKGEKGEPGQGLRGLQGPPGKLGPPGNPGPSGSPGPKGQKGDPGKSPDCDSSLAASERKALQTEMARIKKWLTFSLGKQVGNKFFLTNGEIMTFEKVKALCVKFQASVATPRDAAENRAIRNLIKEEAFLGITDEKTEGQFVDLTGNRLTYTNWNEGEPNNAGSDEDCVLLLKNGQWNDIPCSSSHLAVCEFPI.

A signal peptide spans 1–20; sequence MSLFPSLPLLLLSVVAASYS. In terms of domain architecture, Collagen-like spans 42–99; sequence GINGFPGKDGRDGTKGEKGEPGQGLRGLQGPPGKLGPPGNPGPSGSPGPKGQKGDPGK. Residues 43 to 111 form a disordered region; it reads INGFPGKDGR…DCDSSLAASE (69 aa). Position 47 is a 4-hydroxyproline (proline 47). Residues 49 to 61 show a composition bias toward basic and acidic residues; the sequence is KDGRDGTKGEKGE. 4 positions are modified to 4-hydroxyproline: proline 73, proline 79, proline 82, and proline 88. A compositionally biased stretch (pro residues) spans 75 to 87; sequence KLGPPGNPGPSGS. The segment covering 93–102 has biased composition (basic and acidic residues); the sequence is QKGDPGKSPD. Residues 112 to 130 are a coiled coil; sequence RKALQTEMARIKKWLTFSL. The C-type lectin domain maps to 134 to 245; sequence VGNKFFLTNG…CSSSHLAVCE (112 aa). 2 cysteine pairs are disulfide-bonded: cysteine 155–cysteine 244 and cysteine 222–cysteine 236.

As to quaternary structure, oligomeric complex of 3 or more homotrimers. Interacts with MASP1 and MASP2. Interacts with MEP1A and MEP1B and may inhibit their catalytic activity. Post-translationally, hydroxylation on proline residues within the sequence motif, GXPG, is most likely to be 4-hydroxy as this fits the requirement for 4-hydroxylation in vertebrates.

The protein resides in the secreted. Its function is as follows. Calcium-dependent lectin involved in innate immune defense. Binds mannose, fucose and N-acetylglucosamine on different microorganisms and activates the lectin complement pathway. Binds to late apoptotic cells, as well as to apoptotic blebs and to necrotic cells, but not to early apoptotic cells, facilitating their uptake by macrophages. The protein is Mannose-binding protein C (MBL2) of Pongo pygmaeus (Bornean orangutan).